Consider the following 362-residue polypeptide: Cobalt-precorrin-5B C(1)-methyltransferase (362 aa).

Belongs to the CbiD family.

The catalysed reaction is Co-precorrin-5B + S-adenosyl-L-methionine = Co-precorrin-6A + S-adenosyl-L-homocysteine. It functions in the pathway cofactor biosynthesis; adenosylcobalamin biosynthesis; cob(II)yrinate a,c-diamide from sirohydrochlorin (anaerobic route): step 6/10. Its function is as follows. Catalyzes the methylation of C-1 in cobalt-precorrin-5B to form cobalt-precorrin-6A. The polypeptide is Cobalt-precorrin-5B C(1)-methyltransferase (Burkholderia vietnamiensis (strain G4 / LMG 22486) (Burkholderia cepacia (strain R1808))).